The following is a 400-amino-acid chain: Argininosuccinate synthase (400 aa).

9-17 contacts ATP; it reads AYSGGLDTS. Tyr-87 is an L-citrulline binding site. Gly-117 is an ATP binding site. Residues Thr-119, Asn-123, and Asp-124 each coordinate L-aspartate. L-citrulline is bound at residue Asn-123. Residues Arg-127, Ser-176, Ser-185, Glu-261, and Tyr-273 each contribute to the L-citrulline site.

Belongs to the argininosuccinate synthase family. Type 1 subfamily. Homotetramer.

The protein resides in the cytoplasm. It carries out the reaction L-citrulline + L-aspartate + ATP = 2-(N(omega)-L-arginino)succinate + AMP + diphosphate + H(+). Its pathway is amino-acid biosynthesis; L-arginine biosynthesis; L-arginine from L-ornithine and carbamoyl phosphate: step 2/3. The sequence is that of Argininosuccinate synthase from Chlorobium luteolum (strain DSM 273 / BCRC 81028 / 2530) (Pelodictyon luteolum).